Here is a 226-residue protein sequence, read N- to C-terminus: Thymidylate kinase (226 aa).

An ATP-binding site is contributed by 16–23 (GIDGAGKT).

The protein belongs to the thymidylate kinase family.

It carries out the reaction dTMP + ATP = dTDP + ADP. Its function is as follows. Phosphorylation of dTMP to form dTDP in both de novo and salvage pathways of dTTP synthesis. This is Thymidylate kinase from Xanthomonas euvesicatoria pv. vesicatoria (strain 85-10) (Xanthomonas campestris pv. vesicatoria).